The primary structure comprises 100 residues: Small ribosomal subunit protein uS14c (100 aa).

Belongs to the universal ribosomal protein uS14 family. As to quaternary structure, part of the 30S ribosomal subunit.

The protein localises to the plastid. It localises to the chloroplast. Functionally, binds 16S rRNA, required for the assembly of 30S particles. The protein is Small ribosomal subunit protein uS14c of Crucihimalaya wallichii (Rock-cress).